The following is a 152-amino-acid chain: Probable flagellum biosynthesis repressor protein FlbT (152 aa).

It belongs to the FlbT family.

Has a post-transcriptional repressor function in flagellum biogenesis. Associates with the 5'-UTR of fljK mRNA and promotes its degradation. In Brucella anthropi (strain ATCC 49188 / DSM 6882 / CCUG 24695 / JCM 21032 / LMG 3331 / NBRC 15819 / NCTC 12168 / Alc 37) (Ochrobactrum anthropi), this protein is Probable flagellum biosynthesis repressor protein FlbT.